Here is a 446-residue protein sequence, read N- to C-terminus: Trigger factor (446 aa).

In terms of domain architecture, PPIase FKBP-type spans 163 to 248 (GDRLVIDFEG…VKEIKKKNLL (86 aa)).

The protein belongs to the FKBP-type PPIase family. Tig subfamily.

Its subcellular location is the cytoplasm. It catalyses the reaction [protein]-peptidylproline (omega=180) = [protein]-peptidylproline (omega=0). Its function is as follows. Involved in protein export. Acts as a chaperone by maintaining the newly synthesized protein in an open conformation. Functions as a peptidyl-prolyl cis-trans isomerase. In Natranaerobius thermophilus (strain ATCC BAA-1301 / DSM 18059 / JW/NM-WN-LF), this protein is Trigger factor.